Consider the following 134-residue polypeptide: ATP synthase epsilon chain (134 aa).

This sequence belongs to the ATPase epsilon chain family. F-type ATPases have 2 components, CF(1) - the catalytic core - and CF(0) - the membrane proton channel. CF(1) has five subunits: alpha(3), beta(3), gamma(1), delta(1), epsilon(1). CF(0) has three main subunits: a, b and c.

Its subcellular location is the cell inner membrane. Functionally, produces ATP from ADP in the presence of a proton gradient across the membrane. The polypeptide is ATP synthase epsilon chain (Sinorhizobium fredii (strain NBRC 101917 / NGR234)).